A 481-amino-acid polypeptide reads, in one-letter code: 3-isopropylmalate dehydratase large subunit (481 aa).

Positions 363, 423, and 426 each coordinate [4Fe-4S] cluster. The segment at 432–459 (DQLKPGERSASTSNRNFEGRQGPGGRTH) is disordered.

This sequence belongs to the aconitase/IPM isomerase family. LeuC type 1 subfamily. As to quaternary structure, heterodimer of LeuC and LeuD. The cofactor is [4Fe-4S] cluster.

The catalysed reaction is (2R,3S)-3-isopropylmalate = (2S)-2-isopropylmalate. It functions in the pathway amino-acid biosynthesis; L-leucine biosynthesis; L-leucine from 3-methyl-2-oxobutanoate: step 2/4. Its function is as follows. Catalyzes the isomerization between 2-isopropylmalate and 3-isopropylmalate, via the formation of 2-isopropylmaleate. The protein is 3-isopropylmalate dehydratase large subunit of Corynebacterium glutamicum (strain R).